Consider the following 878-residue polypeptide: MLPRLLAVVRGPGSCRGWREGSPARGSASATVAPPVALPAQAQVVVCGGGIMGTSVAYHLSKMGWKDVVLLEQGRLAAGSTRFCAGILSTARHLAIEQKMADYSNKLYHQLEQETGIQTGYTRTGSIFLAQTQDRLISLKRINSRLNVIGIPCEIISPKKVAELHPLLNVHDLVGAMHVPEDAVVSSADVALALASAASQSGVQIYDRTSILHVMVKKGQVAGVETDKGQIQCQYFVNCAGQWAYELGLCSEEPVSIPLHACEHFYLLTRPWETPLPSSTPTVVDADGRIYIRNWQGGILSGGFEKNPKPIFTEGKNQLEIQNLQEDWDHFEPLLSSLLRRMPQLETLEIVKLVNCPETFTPDMRCIMGESPSVRGYFVLVGMNSAGLSFGGGAGKYLAEWMVYGYPSENVWELDLKRFGALQSSRTFLRHRVMEVMPLLYDLKVPRWDFQTGRQLRTSPLYDRLDAQGARWMEKHGFERPKYFIPPDKDLLALEQSKTFYKPDWFEIVESEVKCCKEAVCVIDMSSFTKFEITSTGDQALEILQYLFSNDLDVPVGHIVHTGMLNERGGYENDCSIARLSKRSFFMISPTDQQVHCWAWLKKYMPEDSNLILEDVTWKYTALNLIGPRTVDVLSELSYAPMTPDHFPSLFCKEMSVGYANGIRVMSMTHTGEPGFMLYIPIEYALHVYNEVMSVGQKYGIRNAGYYALRSLRIEKFFAFWGQDLNTLTTPLECGGESRVKLDKGVDFIGRDALLQQRQNGVYNRLTMFILDDHDTDLDLWPWWGEPIYRNGRYVGKTTSSAYGYTLERHVCLGFVHNFSEDTGEEQVVTADFINRGEYEIDIAGHRFQAKAKLYPVPSLLTHKRRKEDVELSDLHGK.

The N-terminal 26 residues, 1–26 (MLPRLLAVVRGPGSCRGWREGSPARG), are a transit peptide targeting the mitochondrion.

Belongs to the GcvT family. Heterodimer of a catalytic (PDP1) and a regulatory (PDPR) subunit.

Its subcellular location is the mitochondrion matrix. Its function is as follows. Decreases the sensitivity of PDP1 to magnesium ions, and this inhibition is reversed by the polyamine spermine. In Bos taurus (Bovine), this protein is Pyruvate dehydrogenase phosphatase regulatory subunit, mitochondrial (PDPR).